The following is a 201-amino-acid chain: ATP-dependent Clp protease proteolytic subunit (201 aa).

The active-site Nucleophile is S98. H123 is an active-site residue.

It belongs to the peptidase S14 family. Fourteen ClpP subunits assemble into 2 heptameric rings which stack back to back to give a disk-like structure with a central cavity, resembling the structure of eukaryotic proteasomes.

Its subcellular location is the cytoplasm. The catalysed reaction is Hydrolysis of proteins to small peptides in the presence of ATP and magnesium. alpha-casein is the usual test substrate. In the absence of ATP, only oligopeptides shorter than five residues are hydrolyzed (such as succinyl-Leu-Tyr-|-NHMec, and Leu-Tyr-Leu-|-Tyr-Trp, in which cleavage of the -Tyr-|-Leu- and -Tyr-|-Trp bonds also occurs).. Cleaves peptides in various proteins in a process that requires ATP hydrolysis. Has a chymotrypsin-like activity. Plays a major role in the degradation of misfolded proteins. The polypeptide is ATP-dependent Clp protease proteolytic subunit (Rickettsia canadensis (strain McKiel)).